The following is a 418-amino-acid chain: D-amino acid dehydrogenase (418 aa).

Residue 3 to 17 coordinates FAD; the sequence is VLVLGAGVAGVSSAW.

It belongs to the DadA oxidoreductase family. FAD serves as cofactor.

The catalysed reaction is a D-alpha-amino acid + A + H2O = a 2-oxocarboxylate + AH2 + NH4(+). Its function is as follows. Oxidative deamination of D-amino acids. The chain is D-amino acid dehydrogenase from Neisseria meningitidis serogroup A / serotype 4A (strain DSM 15465 / Z2491).